The chain runs to 523 residues: Protein tweety homolog 3 (523 aa).

The Extracellular portion of the chain corresponds to 1–42 (MAGVSYAAPWWVSLLHRLPHFDLSWEATSSQFRPEDTDYQQA). A helical membrane pass occupies residues 43 to 63 (LLLLGAAALACLALDLLFLLF). The Cytoplasmic segment spans residues 64-86 (YSFWLCCRRRKSEEHLDADCCCT). A helical membrane pass occupies residues 87 to 107 (AWCVIIATLVCSAGIAVGFYG). At 108 to 211 (NGETSDGIHR…VDLYDWYRWL (104 aa)) the chain is on the extracellular side. Residues Glu-110 and Asp-113 each contribute to the Ca(2+) site. 2 N-linked (GlcNAc...) asparagine glycosylation sites follow: Asn-126 and Asn-144. Residues 212 to 232 (GYLGLLLLDVIICLLVLVGLI) form a helical membrane-spanning segment. Topologically, residues 233–236 (RSSK) are cytoplasmic. The chain crosses the membrane as a helical span at residues 237 to 257 (GILVGVCLLGVLALVISWGAL). The Extracellular portion of the chain corresponds to 258-386 (GLELAVSVGS…LTGFCYDGVE (129 aa)). Disulfide bonds link Cys-271-Cys-381 and Cys-299-Cys-366. A glycan (N-linked (GlcNAc...) asparagine) is linked at Asn-351. The chain crosses the membrane as a helical span at residues 387–407 (GLIYLALFSFVTALMFSSIVC). Residues 408-523 (SVPHTWQQKR…QPRPDSSGSH (116 aa)) lie on the Cytoplasmic side of the membrane. Disordered regions lie at residues 413–435 (WQQK…RQAH) and 482–523 (QNPR…SGSH). Ser-496 is subject to Phosphoserine. Residues 498 to 501 (PPSY) carry the PY-motif; mediates interaction with NEDD4L motif. A compositionally biased stretch (polar residues) spans 501 to 523 (YTSSMRAKYLATSQPRPDSSGSH). 2 positions are modified to phosphoserine: Ser-504 and Ser-522.

The protein belongs to the tweety family. Homotetramer; disulfide-linked. Homodimer. Interacts with NEDD4L. Ubiquitinated by NEDD4L. In terms of processing, N-Glycosylated. Contains high-mannose, hybrid and complex oligosaccharides. As to expression, expressed in excitable tissues. Expressed in the brain, heart, skeletal muscle, colon, spleen, kidney and peripheral blood leukocytes.

It is found in the cell membrane. It catalyses the reaction chloride(in) = chloride(out). It carries out the reaction L-glutamate(out) = L-glutamate(in). Functionally, calcium-independent, swelling-dependent volume-regulated anion channel (VRAC-swell) which plays a pivotal role in the process of regulatory volume decrease (RVD) in the brain through the efflux of anions like chloride and organic osmolytes like glutamate. Probable large-conductance Ca(2+)-activated chloride channel. This Homo sapiens (Human) protein is Protein tweety homolog 3 (TTYH3).